A 271-amino-acid polypeptide reads, in one-letter code: Thiazole synthase (271 aa).

The active-site Schiff-base intermediate with DXP is the K104. Residues G165, 192–193 (AG), and 214–215 (NT) each bind 1-deoxy-D-xylulose 5-phosphate.

The protein belongs to the ThiG family. In terms of assembly, homotetramer. Forms heterodimers with either ThiH or ThiS.

Its subcellular location is the cytoplasm. The enzyme catalyses [ThiS sulfur-carrier protein]-C-terminal-Gly-aminoethanethioate + 2-iminoacetate + 1-deoxy-D-xylulose 5-phosphate = [ThiS sulfur-carrier protein]-C-terminal Gly-Gly + 2-[(2R,5Z)-2-carboxy-4-methylthiazol-5(2H)-ylidene]ethyl phosphate + 2 H2O + H(+). Its pathway is cofactor biosynthesis; thiamine diphosphate biosynthesis. Its function is as follows. Catalyzes the rearrangement of 1-deoxy-D-xylulose 5-phosphate (DXP) to produce the thiazole phosphate moiety of thiamine. Sulfur is provided by the thiocarboxylate moiety of the carrier protein ThiS. In vitro, sulfur can be provided by H(2)S. The sequence is that of Thiazole synthase from Burkholderia lata (strain ATCC 17760 / DSM 23089 / LMG 22485 / NCIMB 9086 / R18194 / 383).